A 153-amino-acid chain; its full sequence is Aspartate carbamoyltransferase regulatory chain (153 aa).

Zn(2+) contacts are provided by Cys109, Cys114, Cys135, and Cys138.

It belongs to the PyrI family. In terms of assembly, contains catalytic and regulatory chains. The cofactor is Zn(2+).

In terms of biological role, involved in allosteric regulation of aspartate carbamoyltransferase. This is Aspartate carbamoyltransferase regulatory chain from Natronomonas pharaonis (strain ATCC 35678 / DSM 2160 / CIP 103997 / JCM 8858 / NBRC 14720 / NCIMB 2260 / Gabara) (Halobacterium pharaonis).